The primary structure comprises 346 residues: MRVAVDAMGGDNAPAVEVEGAVVAAREFGIPITLVGDTEKLRLELAKHNVQGLDIAIHHASEVVGMHDAASDAVRRKKDSSIRVAFDLVKSGEAEAVVSAGNSGATMAAGMFVLKRLKGIDRPAIAQIFPTLRGKTLVLDVGGNVDCKPIHLVQFAIMGEVYARHVIGVEQPRIGLLSNGEEDSKGNELTRETNAILKNISFDYEGYVEGRDIFNGMVDVVVCDGFVGNVVLKLSEGLAETVGKMLREEIASSLLSKLGYLFVRKAFKNFKKKVDYAEYGGAPLIGINGVAMICHGGSNVKAIKNAIHFAHEYVRKGVNQRLAEKMETEFTAYMQQFDAVKEAVAG.

The protein belongs to the PlsX family. As to quaternary structure, homodimer. Probably interacts with PlsY.

It localises to the cytoplasm. The catalysed reaction is a fatty acyl-[ACP] + phosphate = an acyl phosphate + holo-[ACP]. It participates in lipid metabolism; phospholipid metabolism. Its function is as follows. Catalyzes the reversible formation of acyl-phosphate (acyl-PO(4)) from acyl-[acyl-carrier-protein] (acyl-ACP). This enzyme utilizes acyl-ACP as fatty acyl donor, but not acyl-CoA. In Geobacter sulfurreducens (strain ATCC 51573 / DSM 12127 / PCA), this protein is Phosphate acyltransferase.